A 155-amino-acid chain; its full sequence is 6,7-dimethyl-8-ribityllumazine synthase (155 aa).

5-amino-6-(D-ribitylamino)uracil is bound by residues Phe24, 58–60 (AFE), and 82–84 (AII). Residue 87-88 (ST) coordinates (2S)-2-hydroxy-3-oxobutyl phosphate. His90 functions as the Proton donor in the catalytic mechanism. A 5-amino-6-(D-ribitylamino)uracil-binding site is contributed by Phe115. Arg129 lines the (2S)-2-hydroxy-3-oxobutyl phosphate pocket.

It belongs to the DMRL synthase family.

It catalyses the reaction (2S)-2-hydroxy-3-oxobutyl phosphate + 5-amino-6-(D-ribitylamino)uracil = 6,7-dimethyl-8-(1-D-ribityl)lumazine + phosphate + 2 H2O + H(+). The protein operates within cofactor biosynthesis; riboflavin biosynthesis; riboflavin from 2-hydroxy-3-oxobutyl phosphate and 5-amino-6-(D-ribitylamino)uracil: step 1/2. In terms of biological role, catalyzes the formation of 6,7-dimethyl-8-ribityllumazine by condensation of 5-amino-6-(D-ribitylamino)uracil with 3,4-dihydroxy-2-butanone 4-phosphate. This is the penultimate step in the biosynthesis of riboflavin. The polypeptide is 6,7-dimethyl-8-ribityllumazine synthase (Chlorobium phaeobacteroides (strain BS1)).